A 195-amino-acid polypeptide reads, in one-letter code: RILP-like protein 2 (195 aa).

In terms of domain architecture, RH1 spans 8-92 (SPTQAFDKDV…RTETDRVVAE (85 aa)). A coiled-coil region spans residues 58-149 (LEMFETMVNK…AQEELQLYKS (92 aa)). Residues 115–185 (RPRFTMQELK…ITEESKEKST (71 aa)) form the RH2 domain.

Belongs to the RILPL family.

It is found in the cytoplasm. The protein localises to the cytosol. The protein resides in the cytoskeleton. It localises to the microtubule organizing center. Its subcellular location is the centrosome. It is found in the cell projection. The protein localises to the cilium. Functionally, involved in cell shape and neuronal morphogenesis, positively regulating the establishment and maintenance of dendritic spines. Plays a role in cellular protein transport. This chain is RILP-like protein 2 (rilpl2), found in Danio rerio (Zebrafish).